Consider the following 336-residue polypeptide: Ribosomal RNA large subunit methyltransferase F (336 aa).

The protein belongs to the methyltransferase superfamily. METTL16/RlmF family.

The protein localises to the cytoplasm. It catalyses the reaction adenosine(1618) in 23S rRNA + S-adenosyl-L-methionine = N(6)-methyladenosine(1618) in 23S rRNA + S-adenosyl-L-homocysteine + H(+). Its function is as follows. Specifically methylates the adenine in position 1618 of 23S rRNA. In Serratia proteamaculans (strain 568), this protein is Ribosomal RNA large subunit methyltransferase F.